A 72-amino-acid chain; its full sequence is Translation initiation factor IF-1 (72 aa).

The region spanning 1–72 (MAKEDSIEMQ…TKGRIIFRAR (72 aa)) is the S1-like domain.

This sequence belongs to the IF-1 family. As to quaternary structure, component of the 30S ribosomal translation pre-initiation complex which assembles on the 30S ribosome in the order IF-2 and IF-3, IF-1 and N-formylmethionyl-tRNA(fMet); mRNA recruitment can occur at any time during PIC assembly.

It is found in the cytoplasm. Its function is as follows. One of the essential components for the initiation of protein synthesis. Stabilizes the binding of IF-2 and IF-3 on the 30S subunit to which N-formylmethionyl-tRNA(fMet) subsequently binds. Helps modulate mRNA selection, yielding the 30S pre-initiation complex (PIC). Upon addition of the 50S ribosomal subunit IF-1, IF-2 and IF-3 are released leaving the mature 70S translation initiation complex. The polypeptide is Translation initiation factor IF-1 (Actinobacillus succinogenes (strain ATCC 55618 / DSM 22257 / CCUG 43843 / 130Z)).